A 516-amino-acid chain; its full sequence is Prolyl 4-hydroxylase subunit alpha-1 (516 aa).

Asn-97 is a glycosylation site (N-linked (GlcNAc...) asparagine). One copy of the TPR repeat lies at 189–222 (VYILDYLSYAVYQQGDLSKAMMLTKRLLELDPEH). The N-linked (GlcNAc...) asparagine glycan is linked to Asn-243. Residues 393–501 (TAEELQVANY…KWVSNKWLHE (109 aa)) enclose the Fe2OG dioxygenase domain. Fe cation-binding residues include His-411, Asp-413, and His-482. Residue Lys-492 coordinates 2-oxoglutarate.

Belongs to the P4HA family. As to quaternary structure, heterotetramer of two alpha chains and two beta chains (the beta chain is the multi-functional PDI). Fe(2+) is required as a cofactor. It depends on L-ascorbate as a cofactor.

It localises to the endoplasmic reticulum lumen. The enzyme catalyses L-prolyl-[collagen] + 2-oxoglutarate + O2 = trans-4-hydroxy-L-prolyl-[collagen] + succinate + CO2. Catalyzes the post-translational formation of 4-hydroxyproline in -Xaa-Pro-Gly- sequences in collagens and other proteins. This chain is Prolyl 4-hydroxylase subunit alpha-1 (P4HA1), found in Gallus gallus (Chicken).